The following is a 320-amino-acid chain: Arylacetonitrilase (320 aa).

A CN hydrolase domain is found at 5–286 (IKASVVQAST…EGVISAELDL (282 aa)). Catalysis depends on glutamate 46, which acts as the Proton acceptor. Lysine 133 is an active-site residue. Cysteine 178 (nucleophile) is an active-site residue.

This sequence belongs to the carbon-nitrogen hydrolase superfamily. Nitrilase family.

The catalysed reaction is a nitrile + 2 H2O = a carboxylate + NH4(+). Nitrilase that hydrolyzes preferentially fumaronitrile, while 3-phenylpropionitrile, beta-cyano-L-alanine and 4-cyanopyridine are transformed at much lower rates. The protein is Arylacetonitrilase (nit) of Trametes versicolor (strain FP-101664) (White-rot fungus).